The following is a 139-amino-acid chain: Large ribosomal subunit protein uL16c (139 aa).

A compositionally biased stretch (basic residues) spans 1–17 (MLSPKKTKFRKQHRGRM). The segment at 1–23 (MLSPKKTKFRKQHRGRMKGSASK) is disordered.

This sequence belongs to the universal ribosomal protein uL16 family. In terms of assembly, part of the 50S ribosomal subunit.

The protein resides in the plastid. It localises to the chloroplast. The polypeptide is Large ribosomal subunit protein uL16c (Porphyra purpurea (Red seaweed)).